Here is a 186-residue protein sequence, read N- to C-terminus: 2-oxoglutarate synthase subunit KorC (186 aa).

As to quaternary structure, heterotetramer of the KorA, KorB, KorC and KorD subunits.

It carries out the reaction 2 oxidized [2Fe-2S]-[ferredoxin] + 2-oxoglutarate + CoA = succinyl-CoA + 2 reduced [2Fe-2S]-[ferredoxin] + CO2 + H(+). This is 2-oxoglutarate synthase subunit KorC (korC) from Methanothermobacter marburgensis (strain ATCC BAA-927 / DSM 2133 / JCM 14651 / NBRC 100331 / OCM 82 / Marburg) (Methanobacterium thermoautotrophicum).